The sequence spans 179 residues: Bifunctional protein PyrR (179 aa).

The PRPP-binding motif lies at 97 to 109 (VILIDDVLFTGRT).

This sequence belongs to the purine/pyrimidine phosphoribosyltransferase family. PyrR subfamily.

The catalysed reaction is UMP + diphosphate = 5-phospho-alpha-D-ribose 1-diphosphate + uracil. Its function is as follows. Regulates the transcription of the pyrimidine nucleotide (pyr) operon in response to exogenous pyrimidines. Also displays a weak uracil phosphoribosyltransferase activity which is not physiologically significant. The protein is Bifunctional protein PyrR of Actinobacillus pleuropneumoniae serotype 5b (strain L20).